The following is a 616-amino-acid chain: MALLQISEPGLSAAPHQRRLAAGIDLGTTNSLVATVRSGQAETLADHEGRHLLPSVVHYQQQGHSVGYDARTNAALDTANTISSVKRLMGRSLADIQQRYPHLPYQFQASENGLPMIETAAGLLNPVRVSADILKALAARATEALAGELDGVVITVPAYFDDAQRQGTKDAARLAGLHVLRLLNEPTAAAIAYGLDSGQEGVIAVYDLGGGTFDISILRLSRGVFEVLATGGDSALGGDDFDHLLADYIREQADIPDRSDNRVQRELLDAAIAAKIALSDADSVTVNVAGWQGEISREQFNELIAPLVKRTLLACRRALKDAGVEADEVLEVVMVGGSTRVPLVRERVGEFFGRPPLTSIDPDKVVAIGAAIQADILVGNKPDSEMLLLDVIPLSLGLETMGGLVEKVIPRNTTIPVARAQDFTTFKDGQTAMSIHVMQGERELVQDCRSLARFALRGIPALPAGGAHIRVTFQVDADGLLSVTAMEKSTGVEASIQVKPSYGLTDSEIASMIKDSMSYAEQDVKARMLAEQKVEAARVLESLHGALAADAALLSAAERQVIDNAAAHLSEVAQGDDVDAIEQAIKNVDKQTQDFAARRMDQSVRRALKGHSVDEV.

This sequence belongs to the heat shock protein 70 family.

Chaperone involved in the maturation of iron-sulfur cluster-containing proteins. Has a low intrinsic ATPase activity which is markedly stimulated by HscB. Involved in the maturation of IscU. The chain is Chaperone protein HscA from Shigella boydii serotype 18 (strain CDC 3083-94 / BS512).